Reading from the N-terminus, the 200-residue chain is Recombination protein RecR (200 aa).

The segment at 58-73 (CQVCGNMDTENICGIC) adopts a C4-type zinc-finger fold. The 96-residue stretch at 81–176 (SVIAIVETVA…KISRLASGIP (96 aa)) folds into the Toprim domain.

It belongs to the RecR family.

Functionally, may play a role in DNA repair. It seems to be involved in an RecBC-independent recombinational process of DNA repair. It may act with RecF and RecO. The chain is Recombination protein RecR from Rickettsia bellii (strain OSU 85-389).